Reading from the N-terminus, the 184-residue chain is Peptide deformylase 2 (184 aa).

Positions 110 and 153 each coordinate Fe cation. The active site involves E154. H157 is a binding site for Fe cation.

It belongs to the polypeptide deformylase family. The cofactor is Fe(2+).

The catalysed reaction is N-terminal N-formyl-L-methionyl-[peptide] + H2O = N-terminal L-methionyl-[peptide] + formate. In terms of biological role, removes the formyl group from the N-terminal Met of newly synthesized proteins. Requires at least a dipeptide for an efficient rate of reaction. N-terminal L-methionine is a prerequisite for activity but the enzyme has broad specificity at other positions. In Bacillus subtilis (strain 168), this protein is Peptide deformylase 2 (defB).